Here is a 126-residue protein sequence, read N- to C-terminus: RutC family protein PH0854 (126 aa).

Belongs to the RutC family.

The chain is RutC family protein PH0854 from Pyrococcus horikoshii (strain ATCC 700860 / DSM 12428 / JCM 9974 / NBRC 100139 / OT-3).